Here is a 161-residue protein sequence, read N- to C-terminus: Globin CTT-VIIB-4 (161 aa).

Positions 1 to 16 are cleaved as a signal peptide; sequence MKFFAVLALCIVGAIA. One can recognise a Globin domain in the interval 18–161; the sequence is PLTADEASLV…NTMAVAVAHL (144 aa). H76 and H111 together coordinate heme b.

Belongs to the globin family. In terms of assembly, homodimer.

In Chironomus thummi thummi (Midge), this protein is Globin CTT-VIIB-4 (CTT-7B4).